Here is a 218-residue protein sequence, read N- to C-terminus: Large ribosomal subunit protein uL3 (218 aa).

Residues 126 to 169 (HGFSRGPMTHGSKNHRQPGSIGAGTTPGRIYPGKRMSGRYGGKK) form a disordered region.

Belongs to the universal ribosomal protein uL3 family. Part of the 50S ribosomal subunit. Forms a cluster with proteins L14 and L19.

In terms of biological role, one of the primary rRNA binding proteins, it binds directly near the 3'-end of the 23S rRNA, where it nucleates assembly of the 50S subunit. In Synechococcus sp. (strain CC9902), this protein is Large ribosomal subunit protein uL3.